We begin with the raw amino-acid sequence, 331 residues long: Phosphate acyltransferase (331 aa).

This sequence belongs to the PlsX family. As to quaternary structure, homodimer. Probably interacts with PlsY.

It is found in the cytoplasm. It carries out the reaction a fatty acyl-[ACP] + phosphate = an acyl phosphate + holo-[ACP]. Its pathway is lipid metabolism; phospholipid metabolism. Its function is as follows. Catalyzes the reversible formation of acyl-phosphate (acyl-PO(4)) from acyl-[acyl-carrier-protein] (acyl-ACP). This enzyme utilizes acyl-ACP as fatty acyl donor, but not acyl-CoA. This is Phosphate acyltransferase from Lactococcus lactis subsp. cremoris (strain SK11).